The following is a 288-amino-acid chain: DegV domain-containing protein MYPU_3590 (288 aa).

One can recognise a DegV domain in the interval 3-275; that stretch reads IAIVIDSSSG…LGAIAISLVK (273 aa). Positions 61 and 92 each coordinate hexadecanoate.

Functionally, may bind long-chain fatty acids, such as palmitate, and may play a role in lipid transport or fatty acid metabolism. This is DegV domain-containing protein MYPU_3590 from Mycoplasmopsis pulmonis (strain UAB CTIP) (Mycoplasma pulmonis).